The sequence spans 220 residues: Deoxyribose-phosphate aldolase (220 aa).

Aspartate 89 acts as the Proton donor/acceptor in catalysis. The active-site Schiff-base intermediate with acetaldehyde is lysine 151. Lysine 180 serves as the catalytic Proton donor/acceptor.

This sequence belongs to the DeoC/FbaB aldolase family. DeoC type 1 subfamily.

The protein resides in the cytoplasm. It catalyses the reaction 2-deoxy-D-ribose 5-phosphate = D-glyceraldehyde 3-phosphate + acetaldehyde. It functions in the pathway carbohydrate degradation; 2-deoxy-D-ribose 1-phosphate degradation; D-glyceraldehyde 3-phosphate and acetaldehyde from 2-deoxy-alpha-D-ribose 1-phosphate: step 2/2. Its function is as follows. Catalyzes a reversible aldol reaction between acetaldehyde and D-glyceraldehyde 3-phosphate to generate 2-deoxy-D-ribose 5-phosphate. The protein is Deoxyribose-phosphate aldolase of Streptococcus mutans serotype c (strain ATCC 700610 / UA159).